The chain runs to 100 residues: Small ribosomal subunit protein uS14c (100 aa).

The protein belongs to the universal ribosomal protein uS14 family. Part of the 30S ribosomal subunit.

Its subcellular location is the plastid. The protein resides in the chloroplast. Binds 16S rRNA, required for the assembly of 30S particles. This chain is Small ribosomal subunit protein uS14c, found in Carica papaya (Papaya).